We begin with the raw amino-acid sequence, 266 residues long: Type II pantothenate kinase (266 aa).

6–13 (DAGGTLIK) provides a ligand contact to ATP. The Proton acceptor role is filled by Glu-70. ATP-binding positions include Thr-99, 121–125 (GGMIQ), Tyr-137, and Ser-225.

It belongs to the type II pantothenate kinase family. In terms of assembly, homodimer.

It localises to the cytoplasm. It carries out the reaction (R)-pantothenate + ATP = (R)-4'-phosphopantothenate + ADP + H(+). It functions in the pathway cofactor biosynthesis; coenzyme A biosynthesis; CoA from (R)-pantothenate: step 1/5. In terms of biological role, catalyzes the phosphorylation of pantothenate (Pan), the first step in CoA biosynthesis. This is Type II pantothenate kinase from Staphylococcus haemolyticus (strain JCSC1435).